We begin with the raw amino-acid sequence, 187 residues long: Large ribosomal subunit protein bL21 (187 aa).

The disordered stretch occupies residues 157–187 (KVAKKAVKKTVKKATKTGAKKKAAKKTSKKA).

Belongs to the bacterial ribosomal protein bL21 family. In terms of assembly, part of the 50S ribosomal subunit. Contacts protein L20.

In terms of biological role, this protein binds to 23S rRNA in the presence of protein L20. This chain is Large ribosomal subunit protein bL21, found in Bdellovibrio bacteriovorus (strain ATCC 15356 / DSM 50701 / NCIMB 9529 / HD100).